A 406-amino-acid chain; its full sequence is Protein transport protein HofC homolog (406 aa).

3 helical membrane passes run 167-187 (MVLG…VPQF), 214-234 (QNIG…YFYL), and 379-399 (MMVI…LPIF).

The protein belongs to the GSP F family.

It localises to the cell inner membrane. This chain is Protein transport protein HofC homolog (hofC), found in Haemophilus influenzae (strain ATCC 51907 / DSM 11121 / KW20 / Rd).